A 186-amino-acid chain; its full sequence is ADP-ribosylation factor-like protein 6 (186 aa).

A lipid anchor (N-myristoyl glycine) is attached at Gly2. Residues 24–31, Thr50, 69–73, Gly72, 130–133, and Ala164 each bind GTP; these read GLDNSGKT, DMSGQ, and NKMD. Thr50 contributes to the Mg(2+) binding site.

The protein belongs to the small GTPase superfamily. Arf family. As to quaternary structure, interacts with SEC61B, ARL6IP1, ARL6IP2, ARL6IP3, ARL6IP4 ARL6IP5 and ARL6IP6. Interacts (GTP-bound form) with the BBSome a complex that contains BBS1, BBS2, BBS4, BBS5, BBS7, BBS8/TTC8, BBS9 and BBIP10. Interacts (GTP-free form) with IFT27. As to expression, most abundant in brain and kidney. Expressed in heart and eye. Isoform 2 is expressed only in the retina.

The protein localises to the cell projection. Its subcellular location is the cilium membrane. It is found in the cytoplasm. It localises to the cytoskeleton. The protein resides in the cilium axoneme. The protein localises to the cilium basal body. In terms of biological role, involved in membrane protein trafficking at the base of the ciliary organelle. Mediates recruitment onto plasma membrane of the BBSome complex which would constitute a coat complex required for sorting of specific membrane proteins to the primary cilia. Together with BBS1, is necessary for correct trafficking of PKD1 to primary cilia. Together with the BBSome complex and LTZL1, controls SMO ciliary trafficking and contributes to the sonic hedgehog (SHH) pathway regulation. May regulate cilia assembly and disassembly and subsequent ciliary signaling events such as the Wnt signaling cascade. Isoform 2 may be required for proper retinal function and organization. The polypeptide is ADP-ribosylation factor-like protein 6 (Arl6) (Mus musculus (Mouse)).